Consider the following 464-residue polypeptide: NADH dehydrogenase [ubiquinone] flavoprotein 1, mitochondrial (464 aa).

Residues 1 to 20 (MLAARRLLGWSLPARVSVRF) constitute a mitochondrion transit peptide. Lys-81 carries the post-translational modification N6-acetyllysine; alternate. Position 81 is an N6-succinyllysine; alternate (Lys-81). 87–96 (GRGGAGFPTG) provides a ligand contact to NADH. At Lys-104 the chain carries N6-acetyllysine. 199-247 (RGAGAYICGEETALIESIEGKQGKPRLKPPFPADVGVFGCPTTVANVET) contributes to the FMN binding site. Position 257 is an omega-N-methylarginine (Arg-257). Lys-375 is subject to N6-acetyllysine. [4Fe-4S] cluster contacts are provided by Cys-379, Cys-382, Cys-385, and Cys-425.

It belongs to the complex I 51 kDa subunit family. As to quaternary structure, core subunit of respiratory chain NADH dehydrogenase (Complex I) which is composed of 45 different subunits. This is a component of the flavoprotein-sulfur (FP) fragment of the enzyme. Interacts with RAB5IF. FMN serves as cofactor. [4Fe-4S] cluster is required as a cofactor.

Its subcellular location is the mitochondrion inner membrane. The catalysed reaction is a ubiquinone + NADH + 5 H(+)(in) = a ubiquinol + NAD(+) + 4 H(+)(out). In terms of biological role, core subunit of the mitochondrial membrane respiratory chain NADH dehydrogenase (Complex I) which catalyzes electron transfer from NADH through the respiratory chain, using ubiquinone as an electron acceptor. Part of the peripheral arm of the enzyme, where the electrons from NADH are accepted by flavin mononucleotide (FMN) and then passed along a chain of iron-sulfur clusters by electron tunnelling to the final acceptor ubiquinone. Contains FMN, which is the initial electron acceptor as well as one iron-sulfur cluster. In Pongo pygmaeus (Bornean orangutan), this protein is NADH dehydrogenase [ubiquinone] flavoprotein 1, mitochondrial.